We begin with the raw amino-acid sequence, 366 residues long: tRNA-specific 2-thiouridylase MnmA (366 aa).

ATP is bound by residues 6–13 (AMSGGVDS) and leucine 32. Cysteine 101 serves as the catalytic Nucleophile. Cysteine 101 and cysteine 199 are joined by a disulfide. Residue glycine 125 coordinates ATP. An interaction with tRNA region spans residues 148 to 150 (KDQ). Cysteine 199 (cysteine persulfide intermediate) is an active-site residue.

Belongs to the MnmA/TRMU family.

The protein resides in the cytoplasm. The catalysed reaction is S-sulfanyl-L-cysteinyl-[protein] + uridine(34) in tRNA + AH2 + ATP = 2-thiouridine(34) in tRNA + L-cysteinyl-[protein] + A + AMP + diphosphate + H(+). Functionally, catalyzes the 2-thiolation of uridine at the wobble position (U34) of tRNA, leading to the formation of s(2)U34. This chain is tRNA-specific 2-thiouridylase MnmA, found in Leifsonia xyli subsp. xyli (strain CTCB07).